A 213-amino-acid chain; its full sequence is Thiamine-phosphate synthase (213 aa).

4-amino-2-methyl-5-(diphosphooxymethyl)pyrimidine-binding positions include 40–44 (QFREK) and N75. Mg(2+) is bound by residues D76 and D95. S113 is a binding site for 4-amino-2-methyl-5-(diphosphooxymethyl)pyrimidine. 139-141 (TPS) contacts 2-[(2R,5Z)-2-carboxy-4-methylthiazol-5(2H)-ylidene]ethyl phosphate. K142 serves as a coordination point for 4-amino-2-methyl-5-(diphosphooxymethyl)pyrimidine. 2-[(2R,5Z)-2-carboxy-4-methylthiazol-5(2H)-ylidene]ethyl phosphate is bound by residues G171 and 191-192 (IS).

This sequence belongs to the thiamine-phosphate synthase family. It depends on Mg(2+) as a cofactor.

The enzyme catalyses 2-[(2R,5Z)-2-carboxy-4-methylthiazol-5(2H)-ylidene]ethyl phosphate + 4-amino-2-methyl-5-(diphosphooxymethyl)pyrimidine + 2 H(+) = thiamine phosphate + CO2 + diphosphate. The catalysed reaction is 2-(2-carboxy-4-methylthiazol-5-yl)ethyl phosphate + 4-amino-2-methyl-5-(diphosphooxymethyl)pyrimidine + 2 H(+) = thiamine phosphate + CO2 + diphosphate. It carries out the reaction 4-methyl-5-(2-phosphooxyethyl)-thiazole + 4-amino-2-methyl-5-(diphosphooxymethyl)pyrimidine + H(+) = thiamine phosphate + diphosphate. The protein operates within cofactor biosynthesis; thiamine diphosphate biosynthesis; thiamine phosphate from 4-amino-2-methyl-5-diphosphomethylpyrimidine and 4-methyl-5-(2-phosphoethyl)-thiazole: step 1/1. Condenses 4-methyl-5-(beta-hydroxyethyl)thiazole monophosphate (THZ-P) and 2-methyl-4-amino-5-hydroxymethyl pyrimidine pyrophosphate (HMP-PP) to form thiamine monophosphate (TMP). The polypeptide is Thiamine-phosphate synthase (Staphylococcus aureus (strain MSSA476)).